We begin with the raw amino-acid sequence, 530 residues long: Structure-specific endonuclease subunit SLX1 homolog 2 (530 aa).

One can recognise a GIY-YIG domain in the interval 4–89 (RFHCVYLLTS…PTKSTRLKTQ (86 aa)). Residues 232–365 (CALCSLPLRS…PSQPCPCPLC (134 aa)) form an SLX1-type zinc finger. Disordered regions lie at residues 276–306 (ATMG…MDAH), 410–438 (NSSL…YCGD), and 474–502 (LPPS…RMTD). A compositionally biased stretch (basic and acidic residues) spans 283-298 (RNERSGEYSNKIKDDS).

Belongs to the SLX1 family. As to quaternary structure, forms a heterodimer with a member of the SLX4 family. The cofactor is a divalent metal cation.

The protein localises to the nucleus. Functionally, catalytic subunit of a heterodimeric structure-specific endonuclease that resolves DNA secondary structures generated during DNA repair and recombination. Has endonuclease activity towards branched DNA substrates, introducing single-strand cuts in duplex DNA close to junctions with ss-DNA. The polypeptide is Structure-specific endonuclease subunit SLX1 homolog 2 (Trypanosoma cruzi (strain CL Brener)).